Reading from the N-terminus, the 242-residue chain is MTEITDRYFDDLIARLTGLRGRLAEPMAKAAELITAAALADNRVYVFGTGHSHMMAEELHYRAGGLAITVPILCGAIMLQDGAAASSHFERIKGAVLPILERYGIREGDVLIVVSNSGVNAAPIEAARYAREKGAAVIAVTSVTYSNAIAKGRTQLLSLADVVLDNDAPAGDAVLEMEGSSLKVGPVSTALGVTILNAIFADVAAKLVGKGDAPIYLSANMPGSGEVNRELVARYRDRNPHL.

The 185-residue stretch at 30 to 214 (AAELITAAAL…AKLVGKGDAP (185 aa)) folds into the SIS domain.

The protein belongs to the UPF0309 family.

The polypeptide is UPF0309 protein Oant_1457 (Brucella anthropi (strain ATCC 49188 / DSM 6882 / CCUG 24695 / JCM 21032 / LMG 3331 / NBRC 15819 / NCTC 12168 / Alc 37) (Ochrobactrum anthropi)).